We begin with the raw amino-acid sequence, 259 residues long: 3-deoxy-manno-octulosonate cytidylyltransferase (259 aa).

This sequence belongs to the KdsB family.

It is found in the cytoplasm. It carries out the reaction 3-deoxy-alpha-D-manno-oct-2-ulosonate + CTP = CMP-3-deoxy-beta-D-manno-octulosonate + diphosphate. It functions in the pathway nucleotide-sugar biosynthesis; CMP-3-deoxy-D-manno-octulosonate biosynthesis; CMP-3-deoxy-D-manno-octulosonate from 3-deoxy-D-manno-octulosonate and CTP: step 1/1. The protein operates within bacterial outer membrane biogenesis; lipopolysaccharide biosynthesis. Activates KDO (a required 8-carbon sugar) for incorporation into bacterial lipopolysaccharide in Gram-negative bacteria. This Protochlamydia amoebophila (strain UWE25) protein is 3-deoxy-manno-octulosonate cytidylyltransferase.